The chain runs to 487 residues: N-succinylglutamate 5-semialdehyde dehydrogenase (487 aa).

221–226 (GSSDTG) lines the NAD(+) pocket. Residues Glu-244 and Cys-278 contribute to the active site.

The protein belongs to the aldehyde dehydrogenase family. AstD subfamily.

The catalysed reaction is N-succinyl-L-glutamate 5-semialdehyde + NAD(+) + H2O = N-succinyl-L-glutamate + NADH + 2 H(+). The protein operates within amino-acid degradation; L-arginine degradation via AST pathway; L-glutamate and succinate from L-arginine: step 4/5. Catalyzes the NAD-dependent reduction of succinylglutamate semialdehyde into succinylglutamate. The protein is N-succinylglutamate 5-semialdehyde dehydrogenase of Burkholderia cenocepacia (strain ATCC BAA-245 / DSM 16553 / LMG 16656 / NCTC 13227 / J2315 / CF5610) (Burkholderia cepacia (strain J2315)).